The primary structure comprises 744 residues: Elongation factor G, mitochondrial (744 aa).

The N-terminal 25 residues, 1–25 (MTISCLLRIRPALAKSFFENGQRAF), are a transit peptide targeting the mitochondrion. The region spanning 38-315 (ERIRNIGISA…AVLDYLPNPG (278 aa)) is the tr-type G domain. Residues 47–54 (AHIDSGKT), 114–118 (DTPGH), and 168–171 (NKLD) each bind GTP.

This sequence belongs to the TRAFAC class translation factor GTPase superfamily. Classic translation factor GTPase family. EF-G/EF-2 subfamily.

It localises to the mitochondrion. It functions in the pathway protein biosynthesis; polypeptide chain elongation. Functionally, mitochondrial GTPase that catalyzes the GTP-dependent ribosomal translocation step during translation elongation. During this step, the ribosome changes from the pre-translocational (PRE) to the post-translocational (POST) state as the newly formed A-site-bound peptidyl-tRNA and P-site-bound deacylated tRNA move to the P and E sites, respectively. Catalyzes the coordinated movement of the two tRNA molecules, the mRNA and conformational changes in the ribosome. The polypeptide is Elongation factor G, mitochondrial (Culex quinquefasciatus (Southern house mosquito)).